The following is a 513-amino-acid chain: Maturase K (513 aa).

The protein belongs to the intron maturase 2 family. MatK subfamily.

It localises to the plastid. Its subcellular location is the chloroplast. Functionally, usually encoded in the trnK tRNA gene intron. Probably assists in splicing its own and other chloroplast group II introns. The polypeptide is Maturase K (Panicum capillare (Witchgrass)).